Reading from the N-terminus, the 131-residue chain is Putative pre-16S rRNA nuclease (131 aa).

This sequence belongs to the YqgF nuclease family.

The protein resides in the cytoplasm. In terms of biological role, could be a nuclease involved in processing of the 5'-end of pre-16S rRNA. The protein is Putative pre-16S rRNA nuclease of Bordetella petrii (strain ATCC BAA-461 / DSM 12804 / CCUG 43448).